Here is a 220-residue protein sequence, read N- to C-terminus: 7-cyano-7-deazaguanine synthase (220 aa).

10 to 20 is an ATP binding site; it reads FSGGQDSTTCL. Zn(2+)-binding residues include C188, C197, C200, and C203.

Belongs to the QueC family. Requires Zn(2+) as cofactor.

The catalysed reaction is 7-carboxy-7-deazaguanine + NH4(+) + ATP = 7-cyano-7-deazaguanine + ADP + phosphate + H2O + H(+). It participates in purine metabolism; 7-cyano-7-deazaguanine biosynthesis. In terms of biological role, catalyzes the ATP-dependent conversion of 7-carboxy-7-deazaguanine (CDG) to 7-cyano-7-deazaguanine (preQ(0)). The protein is 7-cyano-7-deazaguanine synthase of Neisseria meningitidis serogroup C (strain 053442).